The following is a 206-amino-acid chain: Large ribosomal subunit protein uL4 (206 aa).

A disordered region spans residues 46-89 (GNRAQKTRAEVKHSTKKPWRQKGTGRARSGMTSSPLWRKGGRAF). Basic residues predominate over residues 59–70 (STKKPWRQKGTG).

The protein belongs to the universal ribosomal protein uL4 family. As to quaternary structure, part of the 50S ribosomal subunit.

Its function is as follows. One of the primary rRNA binding proteins, this protein initially binds near the 5'-end of the 23S rRNA. It is important during the early stages of 50S assembly. It makes multiple contacts with different domains of the 23S rRNA in the assembled 50S subunit and ribosome. In terms of biological role, forms part of the polypeptide exit tunnel. The sequence is that of Large ribosomal subunit protein uL4 from Neisseria gonorrhoeae (strain NCCP11945).